A 331-amino-acid polypeptide reads, in one-letter code: Cathepsin S (331 aa).

The N-terminal stretch at 1-16 (MNWLVWALLLCSSAMA) is a signal peptide. Residues 17–114 (HVHRDPTLDH…VTYKSDPNQK (98 aa)) constitute a propeptide, activation peptide. Asparagine 104 carries an N-linked (GlcNAc...) asparagine glycan. 4 cysteine pairs are disulfide-bonded: cysteine 126–cysteine 224, cysteine 136–cysteine 180, cysteine 170–cysteine 213, and cysteine 272–cysteine 320. Residue cysteine 139 is part of the active site. Active-site residues include histidine 278 and asparagine 298.

The protein belongs to the peptidase C1 family. As to quaternary structure, monomer.

The protein resides in the lysosome. The protein localises to the secreted. Its subcellular location is the cytoplasmic vesicle. It localises to the phagosome. It carries out the reaction Similar to cathepsin L, but with much less activity on Z-Phe-Arg-|-NHMec, and more activity on the Z-Val-Val-Arg-|-Xaa compound.. Its function is as follows. Thiol protease. Key protease responsible for the removal of the invariant chain from MHC class II molecules and MHC class II antigen presentation. The bond-specificity of this proteinase is in part similar to the specificities of cathepsin L. The polypeptide is Cathepsin S (CTSS) (Bos taurus (Bovine)).